An 860-amino-acid chain; its full sequence is Leucine--tRNA ligase (860 aa).

The 'HIGH' region signature appears at 42–52; it reads PYPSGRLHMGH. The short motif at 619-623 is the 'KMSKS' region element; the sequence is KMSKS. Residue Lys-622 coordinates ATP.

It belongs to the class-I aminoacyl-tRNA synthetase family.

It is found in the cytoplasm. It carries out the reaction tRNA(Leu) + L-leucine + ATP = L-leucyl-tRNA(Leu) + AMP + diphosphate. This Yersinia enterocolitica serotype O:8 / biotype 1B (strain NCTC 13174 / 8081) protein is Leucine--tRNA ligase.